Here is a 61-residue protein sequence, read N- to C-terminus: Metallothionein (61 aa).

Methionine 1 is subject to N-acetylmethionine. The beta stretch occupies residues 1 to 29; that stretch reads MDPNCSCAAGGSCTCAGSCKCKECKCTSC. A divalent metal cation-binding residues include cysteine 5, cysteine 7, cysteine 13, cysteine 15, cysteine 19, cysteine 21, cysteine 24, cysteine 26, cysteine 29, cysteine 33, cysteine 34, cysteine 36, cysteine 37, cysteine 41, cysteine 44, cysteine 48, cysteine 50, cysteine 57, cysteine 59, and cysteine 60. The alpha stretch occupies residues 30-61; that stretch reads KKSCCSCCPPGCTKCAQGCVCKGASDKCNCCA.

It belongs to the metallothionein superfamily. Type 1 family. As to quaternary structure, monomer.

Functionally, metallothioneins have a high content of cysteine residues that bind various heavy metals. This chain is Metallothionein, found in Balaena mysticetus (Bowhead whale).